Here is a 91-residue protein sequence, read N- to C-terminus: Small ribosomal subunit protein uS19 (91 aa).

The protein belongs to the universal ribosomal protein uS19 family.

In terms of biological role, protein S19 forms a complex with S13 that binds strongly to the 16S ribosomal RNA. This chain is Small ribosomal subunit protein uS19, found in Pseudomonas fluorescens (strain Pf0-1).